The primary structure comprises 379 residues: Homoserine O-succinyltransferase (379 aa).

Residues 51-360 (NAVLICHALS…DAPQGHDAFL (310 aa)) enclose the AB hydrolase-1 domain. The Nucleophile role is filled by Ser-157. Residue Arg-227 coordinates substrate. Residues Asp-323 and His-356 contribute to the active site. Asp-357 contributes to the substrate binding site.

This sequence belongs to the AB hydrolase superfamily. MetX family. In terms of assembly, homodimer.

It is found in the cytoplasm. It carries out the reaction L-homoserine + succinyl-CoA = O-succinyl-L-homoserine + CoA. Its pathway is amino-acid biosynthesis; L-methionine biosynthesis via de novo pathway; O-succinyl-L-homoserine from L-homoserine: step 1/1. Its function is as follows. Transfers a succinyl group from succinyl-CoA to L-homoserine, forming succinyl-L-homoserine. In Pseudomonas savastanoi pv. phaseolicola (strain 1448A / Race 6) (Pseudomonas syringae pv. phaseolicola (strain 1448A / Race 6)), this protein is Homoserine O-succinyltransferase.